A 493-amino-acid chain; its full sequence is Ubiquitin carboxyl-terminal hydrolase 14 (493 aa).

The Ubiquitin-like domain occupies 4-80; sequence YSVTVKWGKE…MMGSADALPE (77 aa). Thr-52 is modified (phosphothreonine). The region spanning 105 to 482 is the USP domain; that stretch reads CGLTNLGNTC…IAYVLLYGPR (378 aa). Cys-114 (nucleophile) is an active-site residue. 2 positions are modified to phosphoserine: Ser-143 and Ser-148. Residue Thr-235 is modified to Phosphothreonine. 3 positions are modified to phosphoserine: Ser-237, Ser-302, and Ser-431. The active-site Proton acceptor is His-434. An N6-acetyllysine modification is found at Lys-448.

It belongs to the peptidase C19 family. USP14/UBP6 subfamily. Homodimer (Potential). Associates with the 26S proteasome. Interacts with FANCC, CXCR4 and ERN1. Interacts with TRIM14; this interaction recruits USP14 to cleave ubiquitin chains of CGAS and KDM4D.

The protein localises to the cytoplasm. It is found in the cell membrane. It carries out the reaction Thiol-dependent hydrolysis of ester, thioester, amide, peptide and isopeptide bonds formed by the C-terminal Gly of ubiquitin (a 76-residue protein attached to proteins as an intracellular targeting signal).. In terms of biological role, proteasome-associated deubiquitinase which releases ubiquitin from the proteasome targeted ubiquitinated proteins. Ensures the regeneration of ubiquitin at the proteasome. Is a reversibly associated subunit of the proteasome and a large fraction of proteasome-free protein exists within the cell. Required for the degradation of the chemokine receptor CXCR4 which is critical for CXCL12-induced cell chemotaxis. Also serves as a physiological inhibitor of endoplasmic reticulum-associated degradation (ERAD) under the non-stressed condition by inhibiting the degradation of unfolded endoplasmic reticulum proteins via interaction with ERN1. Indispensable for synaptic development and function at neuromuscular junctions (NMJs). Plays a role in the innate immune defense against viruses by stabilizing the viral DNA sensor CGAS and thus inhibiting its autophagic degradation. Inhibits OPTN-mediated selective autophagic degradation of KDM4D and thereby negatively regulates H3K9me2 and H3K9me3. The polypeptide is Ubiquitin carboxyl-terminal hydrolase 14 (Usp14) (Mus musculus (Mouse)).